The following is a 128-amino-acid chain: Large ribosomal subunit protein bL17 (128 aa).

This sequence belongs to the bacterial ribosomal protein bL17 family. In terms of assembly, part of the 50S ribosomal subunit. Contacts protein L32.

This Ehrlichia ruminantium (strain Gardel) protein is Large ribosomal subunit protein bL17.